A 273-amino-acid chain; its full sequence is Pantothenate synthetase (273 aa).

Residue 27–34 (MGALHNGH) participates in ATP binding. The Proton donor role is filled by His34. Gln58 contacts (R)-pantoate. Gln58 contributes to the beta-alanine binding site. 144-147 (GKKD) lines the ATP pocket. Residue Gln150 coordinates (R)-pantoate. ATP contacts are provided by residues Val173 and 181 to 184 (LSSR).

Belongs to the pantothenate synthetase family. In terms of assembly, homodimer.

It is found in the cytoplasm. The catalysed reaction is (R)-pantoate + beta-alanine + ATP = (R)-pantothenate + AMP + diphosphate + H(+). Its pathway is cofactor biosynthesis; (R)-pantothenate biosynthesis; (R)-pantothenate from (R)-pantoate and beta-alanine: step 1/1. Catalyzes the condensation of pantoate with beta-alanine in an ATP-dependent reaction via a pantoyl-adenylate intermediate. The chain is Pantothenate synthetase from Campylobacter fetus subsp. fetus (strain 82-40).